A 306-amino-acid polypeptide reads, in one-letter code: Uracil phosphoribosyltransferase homolog (306 aa).

Disordered regions lie at residues 1–28 (MATE…NPEP) and 58–87 (SSVP…NYDA). 2 stretches are compositionally biased toward polar residues: residues 13-28 (CHNQ…NPEP) and 70-79 (GGATFNSENN). Residues arginine 130, arginine 139, and 173 to 176 (EKGN) each bind GTP. 5-phospho-alpha-D-ribose 1-diphosphate is bound at residue arginine 183. Residues arginine 200 and arginine 229 each coordinate GTP. A 5-phospho-alpha-D-ribose 1-diphosphate-binding site is contributed by 235-243 (YPILSTGNT). 296–298 (THF) lines the uracil pocket.

This sequence belongs to the UPRTase family.

The protein localises to the cytoplasm. The protein resides in the nucleus. This chain is Uracil phosphoribosyltransferase homolog (UPRT), found in Bos taurus (Bovine).